The following is a 213-amino-acid chain: Thymidylate kinase (213 aa).

Residue 11–18 participates in ATP binding; it reads GPEGAGKT.

It belongs to the thymidylate kinase family.

It carries out the reaction dTMP + ATP = dTDP + ADP. Its function is as follows. Phosphorylation of dTMP to form dTDP in both de novo and salvage pathways of dTTP synthesis. This is Thymidylate kinase from Leuconostoc mesenteroides subsp. mesenteroides (strain ATCC 8293 / DSM 20343 / BCRC 11652 / CCM 1803 / JCM 6124 / NCDO 523 / NBRC 100496 / NCIMB 8023 / NCTC 12954 / NRRL B-1118 / 37Y).